The sequence spans 109 residues: Ribonuclease P protein component (109 aa).

Belongs to the RnpA family. As to quaternary structure, consists of a catalytic RNA component (M1 or rnpB) and a protein subunit.

It carries out the reaction Endonucleolytic cleavage of RNA, removing 5'-extranucleotides from tRNA precursor.. In terms of biological role, RNaseP catalyzes the removal of the 5'-leader sequence from pre-tRNA to produce the mature 5'-terminus. It can also cleave other RNA substrates such as 4.5S RNA. The protein component plays an auxiliary but essential role in vivo by binding to the 5'-leader sequence and broadening the substrate specificity of the ribozyme. The protein is Ribonuclease P protein component of Streptococcus agalactiae serotype III (strain NEM316).